Consider the following 287-residue polypeptide: Inositol diphosphatase siw14 (287 aa).

In terms of domain architecture, Tyrosine-protein phosphatase spans N85–D256. A phosphoserine mark is found at S156 and S159. C189 acts as the Phosphocysteine intermediate in catalysis.

This sequence belongs to the protein-tyrosine phosphatase family. Atypical dual-specificity phosphatase Siw14-like subfamily.

It is found in the cytoplasm. Its subcellular location is the nucleus. It carries out the reaction 5-diphospho-1D-myo-inositol 1,2,3,4,6-pentakisphosphate + H2O = 1D-myo-inositol hexakisphosphate + phosphate + H(+). The enzyme catalyses 1-diphospho-1D-myo-inositol 2,3,4,5,6-pentakisphosphate + H2O = 1D-myo-inositol hexakisphosphate + phosphate + H(+). The catalysed reaction is 1,5-bis(diphospho)-1D-myo-inositol 2,3,4,6-tetrakisphosphate + H2O = 1-diphospho-1D-myo-inositol 2,3,4,5,6-pentakisphosphate + phosphate + 2 H(+). Activity is inhibited by the reaction product inorganic phosphate and by sulfate (a phosphate mimetic). Not inhibited by magnesium. Cleaves the beta-phosphate at the 1- and 5-position of soluble inositol pyrophosphates. Has exopolyphosphatase activity in vitro but does not appear to contribute to the homeostasis of cellular polyphosphate. The sequence is that of Inositol diphosphatase siw14 from Schizosaccharomyces pombe (strain 972 / ATCC 24843) (Fission yeast).